We begin with the raw amino-acid sequence, 2514 residues long: MNNLEIINLIDKGVAIVGVGFRIPSGNNENSICSPDDLFNNLKNGFDGVSSTSERWSDNFHKLGEISSPNAGLLPFNECKSFDPLFFGINPSDAHQIDPQQRLLLKCTWEALEDASIDPISIRGTNTSVFIGSSNIDYQHINKHQDSVLKNVIAQSAYAVSNRISYCFDFNGPSLSIDTACSSSLNAVSQGYHSILNGTSNMSIVGGVNLILDVGMIKAYSYLSMLSKTHGKCKAFDESGDGFTRGECATIVVLKNLQDAVKDGNRIYCVINGSSSNVDGGGHMDKVNLYSPSKQSQFNNINSAFKSTNGKLSINDIQYIEAHGTGTKTGDPIETEAISMAFKNRDKSTPILIGSIKSNIGHCEAGSGVASLIKCCLMFKYQCFLPNIHFKNPNPLIKFNEWNLKVVTSPIPFNKRINEKPVSMMINNFGVTGSNCCLLISEFKKQDYESYENNNNNKSNHKNILIPFSANSSNSLNQYQSKFKNIINNQFNFIDFTANQIYSKSNYLYQRSVVIASNSNELFEKILNKKQIQTKNSIISNMSFKGKNPITIFVFSGQGSQYPKMALELYNNDEIFKKSIDLIDSKLSKYYGYSVWGKLTTIKDDDLTSIHDPIFAQPALCMLSVSLFEIYCHWGVNPSFILGHSLGEISAAYCSGMIDLDTFCYTVYYRSIAQSKTNGCGRMLSINISDEEFKSMYSQKYPQIEIACYNSPQSIVVAGNESILNEISKELKEKEIFTAMLGSLSSFHTSSQQCTKDSILQLNIESNQPKVPIFSTVTTNLFNESNRFNSQYVYDNIIKPVKFTQTISNIYKHIESNQLNNDIVFIEIAPHPTISFYIKQMVPSSLNESVSVYSALHKKKNDVEEFQQTISNLYCQNGYSINFKCQLENKKSNQSINLPLYQWDDELYFAQTQTLEQYTKEGPPIDHLGLSNSYYSPFKNSYRTFIDINNKPFQYLKGHMVKGKYYFPGCGYIDIIIQLYKNQDIFISFIEFKTPLILIEGINQYLQTNIQQTGKSEYRAQFHFKDQKSNEWIQSSNANFQLLDHGNDIPSNYNIEEIIKNKCNLSKLTKNELYTQIKSKTGLNYTGVFQGATECYLGNDCSLSVLSLKSQTNSFLNIPILDTCLHGMLVLINDQSQIVFDKAIGFKYYSSNIPSDLKEYKDSIYVYSNLKPKNADSYHGSIIVMLSDGSVLYEIQEVIFKSLIPIKHSLKIEYPNDELYKVHLQSKDSQIPTPSSFKSIIYENDFFHSALNIPEDLFKYISTLFYKDIIKRCPEININKINSHSVNEIISSFSKISKNQRLFRFVFETIKENGILNSLEENDDAYFEFNELVIKSSKIISKLLFPLESDNDNEDLPQSLFQNGLMDKIYKCSYLRKKYQMISHVIIHSIKEIINNNIIIRILEFGGGTASLSVEVIGEIVALLQENPNYQVEIEYTWSDISPAFIADAKNKINKIINDAAITNGLNVIYRSLTIDESLLENQAIKPSYYDFVIMSNVLHVVKNIKQAVEQMYQLLTPNGQLLFIEPPYKSVLIDSIIGSFEQWWSFTDTDIRKDRCGMSQQSWYQLLKTCNFKDILMSKECIFVGSVIHAQKPPISLLNSQPKHDNIIIYGGGGNLSFVENIKLDSNSKSLIQIETIQEFNQLLSQSTITNDSIIYFIKTLETLSLDNYKQITLEYIEINQRLLQINSLCKHVLIVSDSRKTNYLASSVVGAARYFDEFQQLKLHTLDFDYDSTQNYINSKNNKMVQFINILVDSKTNVHKEMIIINNKVYYEIVQKEKNLKLKYNSESFENQNNLMCSLSPNLEYQLQSKQIKLRDNQVEVKTIATGINYKDYLNFSGSNNNNGDDNTGLPQFGYEFSGIITRVGNNVKDYKVGDNVFGLSNSCTSSHIVTNFKNIQLKPSNISHNEASSIPIDYLTSFMSLFNVGSLNIEDNESILIHLGSDSFGLSTFEILKWKGFKSNLFVTVDLDETKQYLLDRYGDFITGIYSNTDKSYVTEIKNELIKLGSKKKGVDLILNTLPSDFMDSNFELLTKSGRIIDLTSNHLNQSEFLKNINFKYNHGYHNFQLSLIQKNKIQKCLYEISHAIENGELKTIPIKEFTNLNIKDAIKYITNGNIEKITVSHDHEIYSDIIYRSLDEKEFSILKSNYQINSNNLGKNILITGQSGIILEILKWIIKYSNINTIENVIILSRSSLKWELELLINQTKLSNNNIKFHFKSVDVGDSEQVDNAINEILNENQQITNIDSIYHFAFQQITCKVQEINMKHLDISHGAKSMGAVNLHNQSIKRNWKLINFVMASSALSLIGSTDQCTYACANLLLDSFSKYRESLGLPSACINLGSIESTGFVSKNESISEFTDGIGYVPTPINLVLGLLDLQIQNAGKFTNSMLSNLISSKFKNIQQTSLFLKFDYLMNLNDNSEQTKKENIGNKNIDELFIEKVSELFSTDQSRINKNLRLIDYGADSLIIVQLKNWIDKEIGINLITIKQLQNNTINISIKMILNSLMKNNQI.

Residues 11–442 enclose the Ketosynthase family 3 (KS3) domain; that stretch reads DKGVAIVGVG…GSNCCLLISE (432 aa). Residues C181, H323, and H362 each act as for beta-ketoacyl synthase activity in the active site. Residues 635-668 form an acyl/malonyl transferase region; that stretch reads GVNPSFILGHSLGEISAAYCSGMIDLDTFCYTVY. S645 (for acyl/malonyl transferase activity) is an active-site residue. The segment at 925-1047 is N-terminal hotdog fold; that stretch reads IDHLGLSNSY…ANFQLLDHGN (123 aa). Positions 925–1209 constitute a PKS/mFAS DH domain; the sequence is IDHLGLSNSY…FKSLIPIKHS (285 aa). H959 functions as the Proton acceptor; for dehydratase activity in the catalytic mechanism. Positions 1064 to 1209 are C-terminal hotdog fold; the sequence is NLSKLTKNEL…FKSLIPIKHS (146 aa). D1122 acts as the Proton donor; for dehydratase activity in catalysis. Positions 2431–2508 constitute a Carrier domain; sequence IGNKNIDELF…ISIKMILNSL (78 aa). An O-(pantetheine 4'-phosphoryl)serine modification is found at S2468.

Pantetheine 4'-phosphate is required as a cofactor.

Its function is as follows. Probable polyketide synthase. The chain is Probable polyketide synthase 8/35 (pks8) from Dictyostelium discoideum (Social amoeba).